A 133-amino-acid polypeptide reads, in one-letter code: Agouti-signaling protein (133 aa).

Positions 1 to 22 (MDVIHLFLATLLVSLCFLTAYS) are cleaved as a signal peptide. Over residues 26-36 (PEEKPKDDRSL) the composition is skewed to basic and acidic residues. A disordered region spans residues 26–83 (PEEKPKDDRSLRNNSSMNLLDSPSVSIMALNKKSKKISRKEAEKKKRSSKKKASMTKV). Over residues 37-50 (RNNSSMNLLDSPSV) the composition is skewed to polar residues. N38 and N39 each carry an N-linked (GlcNAc...) asparagine glycan. The span at 70–79 (KKRSSKKKAS) shows a compositional bias: basic residues. 5 disulfide bridges follow: C94-C109, C101-C115, C108-C126, C112-C133, and C117-C124. Residues 94-133 (CVATRDSCKPPAPACCDPCASCQCRFFRSACSCRVLTRTC) enclose the Agouti domain.

Its subcellular location is the secreted. In terms of biological role, involved in the regulation of melanogenesis. The binding of ASP to MC1R precludes alpha-MSH initiated signaling and thus blocks production of cAMP, leading to a down-regulation of eumelanogenesis (brown/black pigment) and thus increasing synthesis of pheomelanin (yellow/red pigment). The polypeptide is Agouti-signaling protein (ASIP) (Equus caballus (Horse)).